The following is a 614-amino-acid chain: Allergen Ara h 1, clone P17 (614 aa).

Positions 1–25 are cleaved as a signal peptide; sequence MRGRVSPLMLLLGILVLASVSATQA. Disordered stretches follow at residues 72–177, 334–356, 372–397, and 464–491; these read DTGA…RRFS, NAGGEQEERGQRRRSTRSSDNEG, HAKSVSKKGSEEEDITNPINLRDGEP, and KEQQQRGRREQEWEEEEEDEEEEGSNRE. Positions 81-132 are enriched in basic and acidic residues; that stretch reads PPGERTRGRQPGDYDDDRRQPRREEGGRWGPAEPREREREEDWRQPREDWRR. Residues 169–327 form the Cupin type-1 1 domain; that stretch reads FYFPSRRFST…AFNAEFNEIR (159 aa). One can recognise a Cupin type-1 2 domain in the interval 390-566; it reads INLRDGEPDL…AFPGSGEQVE (177 aa). The span at 464-474 shows a compositional bias: basic and acidic residues; it reads KEQQQRGRREQ. Over residues 475-486 the composition is skewed to acidic residues; the sequence is EWEEEEEDEEEE. Asparagine 516 carries an N-linked (GlcNAc...) asparagine glycan. The disordered stretch occupies residues 572-614; that stretch reads QRESHFVSARPQSQSPSSPEKEDQEEENQGGKGPLLSILKAFN.

Belongs to the 7S seed storage protein family.

This is Allergen Ara h 1, clone P17 from Arachis hypogaea (Peanut).